Here is a 328-residue protein sequence, read N- to C-terminus: tRNA uridine(34) hydroxylase (328 aa).

Residues 130 to 224 (LDEDTVVLDT…YGKDPEVQGE (95 aa)) enclose the Rhodanese domain. Cys-184 functions as the Cysteine persulfide intermediate in the catalytic mechanism.

The protein belongs to the TrhO family.

It catalyses the reaction uridine(34) in tRNA + AH2 + O2 = 5-hydroxyuridine(34) in tRNA + A + H2O. Catalyzes oxygen-dependent 5-hydroxyuridine (ho5U) modification at position 34 in tRNAs. In Streptococcus gordonii (strain Challis / ATCC 35105 / BCRC 15272 / CH1 / DL1 / V288), this protein is tRNA uridine(34) hydroxylase.